Reading from the N-terminus, the 638-residue chain is Bromodomain-containing factor 2 (638 aa).

The segment covering 1 to 10 (MSRTNMDTRH) has biased composition (basic and acidic residues). Residues 1 to 54 (MSRTNMDTRHAHSALLAAPQSATANSRSSNSSSESSSNKNNINVGVGDDSGNVS) are disordered. The span at 25 to 43 (NSRSSNSSSESSSNKNNIN) shows a compositional bias: low complexity. A Bromo 1 domain is found at 130 to 239 (EAEELPPHQS…KYFEKKLSAM (110 aa)). The tract at residues 250–306 (KKTSRNRKKNEDMDSPLVIRRSVSTTNDNIGESGNREGVSGGRPKRTIHPPKSKDLF) is disordered. Ser-264 is modified (phosphoserine). Residues 271–281 (SVSTTNDNIGE) are compositionally biased toward polar residues. Residues 317–426 (KTLQKKFRTC…ELFNFHWLEN (110 aa)) form the Bromo 2 domain. Positions 435–460 (TDSDLEEDNYSSSYSSDDEYDDEDIN) are disordered. Residues 450–460 (SDDEYDDEDIN) are compositionally biased toward acidic residues. Residues 468–537 (AIQYLEQKLK…INELSDLEMN (70 aa)) are a coiled coil. Residues 506-590 (TLLRRKAMKH…EKKNNNNSKR (85 aa)) form the NET domain. Residues 586-638 (NNSKRKLSGNYSTAPTNKKKKTLKFLEKDEIINNNNYSDSEEDSSDSSDSDSD) are disordered. Acidic residues predominate over residues 624–638 (DSEEDSSDSSDSDSD).

The protein belongs to the BET family. As to quaternary structure, interacts with the TFIID subunit TAF7 and with histone H4. In terms of processing, phosphorylated by the casein kinase CK2 complex.

The protein resides in the cytoplasm. It is found in the nucleus. In terms of biological role, transcription factor involved in the expression of a broad class of genes including snRNAs. Required for sporulation and DNA-damage repair. Prevents the spreading of SIR silencing at telomeres and protects histone H4, but not H3, from deacetylation. This chain is Bromodomain-containing factor 2 (BDF2), found in Saccharomyces cerevisiae (strain ATCC 204508 / S288c) (Baker's yeast).